Consider the following 183-residue polypeptide: Heavy metal-associated isoprenylated plant protein 44 (183 aa).

In terms of domain architecture, HMA spans 50–113 (LQTVELKVRM…AVRRAGKRAE (64 aa)). 2 residues coordinate a metal cation: Cys61 and Cys64. Cys180 carries the post-translational modification Cysteine methyl ester. Residue Cys180 is the site of S-farnesyl cysteine attachment. A propeptide spans 181–183 (RLM) (removed in mature form).

Belongs to the HIPP family.

Heavy-metal-binding protein. The polypeptide is Heavy metal-associated isoprenylated plant protein 44 (Arabidopsis thaliana (Mouse-ear cress)).